The sequence spans 455 residues: Golgi pH regulator (455 aa).

The next 5 helical transmembrane spans lie at 5-25 (IDSSIMVTSQILFFGFGWLFF), 46-66 (VTFAFSCTMFELIIFEILGVL), 79-99 (LCVILLILVFMVPFYIGYFIV), 114-134 (CLLWLTFMYFFWKLGDPFPIL), and 150-170 (VGVIGVTLMALLSGFGAVNCP). N-linked (GlcNAc...) asparagine glycans are attached at residues Asn180 and Asn243. 4 consecutive transmembrane segments (helical) span residues 290–310 (GYFFSIYCVWKIFMATINIVL), 343–363 (ISFILVGIIIVSSIRGLLITL), 378–398 (VIVLLLAQIMGMYFVSSVLLI), and 425–445 (WFDVIFLVSALSSILFLYLAH).

This sequence belongs to the Golgi pH regulator (TC 1.A.38) family. Homotrimer. Interacts with RABL3; the interaction stabilizes GPR89B.

It localises to the golgi apparatus membrane. The enzyme catalyses iodide(out) = iodide(in). The catalysed reaction is chloride(in) = chloride(out). It carries out the reaction bromide(in) = bromide(out). It catalyses the reaction fluoride(in) = fluoride(out). Voltage-gated channel that enables the transfer of anions such as iodide, chloride, bromide and fluoride which may function in counter-ion conductance and participates in Golgi acidification. Plays a role in lymphocyte development, probably by acting as a RABL3 effector in hematopoietic cells. The chain is Golgi pH regulator from Cricetulus griseus (Chinese hamster).